The sequence spans 69 residues: Large ribosomal subunit protein uL29 (69 aa).

It belongs to the universal ribosomal protein uL29 family.

This chain is Large ribosomal subunit protein uL29, found in Methylobacillus flagellatus (strain ATCC 51484 / DSM 6875 / VKM B-1610 / KT).